The sequence spans 321 residues: Probable E3 ubiquitin-protein ligase BAH1-like 1 (321 aa).

The SPX domain maps to 1–149 (MKFAKKYEKY…YSKQGQEFKA (149 aa)). An RING-type zinc finger spans residues 217 to 266 (CSICLDTVFDPVALSCGHIYCYLCSCSAASVTIVDGLKSAERKSKCPLCR).

The protein belongs to the RING-type zinc finger family.

The catalysed reaction is S-ubiquitinyl-[E2 ubiquitin-conjugating enzyme]-L-cysteine + [acceptor protein]-L-lysine = [E2 ubiquitin-conjugating enzyme]-L-cysteine + N(6)-ubiquitinyl-[acceptor protein]-L-lysine.. It functions in the pathway protein modification; protein ubiquitination. The polypeptide is Probable E3 ubiquitin-protein ligase BAH1-like 1 (Oryza sativa subsp. indica (Rice)).